The primary structure comprises 78 residues: Toxin-like protein 10 (78 aa).

A signal peptide spans 1 to 23 (MKATALLIAVFILFSVFGDMGYC).

Post-translationally, contains 4 disulfide bonds. In terms of tissue distribution, expressed by the venom gland.

The protein resides in the secreted. The chain is Toxin-like protein 10 from Urodacus yaschenkoi (Inland robust scorpion).